The sequence spans 506 residues: UPF0522 protein A (506 aa).

An N-terminal signal peptide occupies residues 1–18; the sequence is MIKSLLLLISIIIGIVIS. Asparagine 145, asparagine 155, asparagine 330, asparagine 366, asparagine 418, and asparagine 427 each carry an N-linked (GlcNAc...) asparagine glycan.

It belongs to the UPF0522 family.

It is found in the secreted. The sequence is that of UPF0522 protein A from Dictyostelium discoideum (Social amoeba).